The primary structure comprises 246 residues: 3-deoxy-manno-octulosonate cytidylyltransferase (246 aa).

This sequence belongs to the KdsB family.

The protein resides in the cytoplasm. The catalysed reaction is 3-deoxy-alpha-D-manno-oct-2-ulosonate + CTP = CMP-3-deoxy-beta-D-manno-octulosonate + diphosphate. It participates in nucleotide-sugar biosynthesis; CMP-3-deoxy-D-manno-octulosonate biosynthesis; CMP-3-deoxy-D-manno-octulosonate from 3-deoxy-D-manno-octulosonate and CTP: step 1/1. It functions in the pathway bacterial outer membrane biogenesis; lipopolysaccharide biosynthesis. Its function is as follows. Activates KDO (a required 8-carbon sugar) for incorporation into bacterial lipopolysaccharide in Gram-negative bacteria. This Paramagnetospirillum magneticum (strain ATCC 700264 / AMB-1) (Magnetospirillum magneticum) protein is 3-deoxy-manno-octulosonate cytidylyltransferase.